Here is a 713-residue protein sequence, read N- to C-terminus: Calpastatin (713 aa).

Disordered stretches follow at residues 1 to 187 and 211 to 506; these read MNPT…LDPM and DKKE…PVLP. Basic residues predominate over residues 21–30; the sequence is PNKKRHKKQA. A Glycyl lysine isopeptide (Lys-Gly) (interchain with G-Cter in SUMO2) cross-link involves residue Lys32. Over residues 46 to 63 the composition is skewed to basic and acidic residues; the sequence is VVHEKKTQEVKPKEHPEP. N6-acetyllysine is present on Lys50. Over residues 85 to 94 the composition is skewed to polar residues; that stretch reads SRSNEQPTSE. 2 positions are modified to phosphoserine: Ser87 and Ser134. Thr136 is modified (phosphothreonine). Residues 171 to 223 form an Inhibitory domain 1 repeat; it reads TEEDNTTYTGPEVLDPMSSTYIEELGKREVTLPPKYRELLDKKEGIPVPPPDT. The residue at position 244 (Ser244) is a Phosphoserine. Basic and acidic residues-rich tracts occupy residues 248–258, 304–332, and 342–367; these read DGKKTEKEKST, RKSEPELDLSSIKEIDEAKAKEEKLKKCG, and YRLKPAMDKDGKPLLPEAEEKPKPLS. An Inhibitory domain 2 repeat occupies 307 to 359; the sequence is EPELDLSSIKEIDEAKAKEEKLKKCGEDDETVPPEYRLKPAMDKDGKPLLPEA. A phosphoserine mark is found at Ser367, Ser369, and Ser376. Positions 370-379 are enriched in acidic residues; the sequence is ELIDELSEDF. Over residues 380–397 the composition is skewed to basic and acidic residues; that stretch reads DQSKRKEKQSKPTEKTKE. At Ser441 the chain carries Phosphoserine. The span at 443 to 502 shows a compositional bias: basic and acidic residues; sequence GKKEADPEDGKPVEDKVKEKAKEEDREKLGEKEETIPPDYRLEEVKDKDGKTLPHKDPKE. One copy of the Inhibitory domain 3 repeat lies at 447-500; the sequence is ADPEDGKPVEDKVKEKAKEEDREKLGEKEETIPPDYRLEEVKDKDGKTLPHKDP. Residues Ser517 and Ser528 each carry the phosphoserine modification. The interval 536–713 is disordered; sequence SAAVSEVVSQ…KQKSDGKSTS (178 aa). Positions 542–553 are enriched in polar residues; sequence VVSQTSAPTTHS. A phosphoserine mark is found at Ser575 and Ser577. Residues 583–636 form an Inhibitory domain 4 repeat; sequence PDPDENKPIEDKVKEKAEAEHRDKLGERDDTIPPEYRHLLDKDEEGKSTKPPTK. Basic and acidic residues-rich tracts occupy residues 583–646 and 691–713; these read PDPD…KPEA and KAKDSTKAKEETSKQKSDGKSTS.

The protein belongs to the protease inhibitor I27 (calpastatin) family.

Its function is as follows. Specific inhibition of calpain (calcium-dependent cysteine protease). Plays a key role in postmortem tenderization of meat and have been proposed to be involved in muscle protein degradation in living tissue. This Sus scrofa (Pig) protein is Calpastatin (CAST).